We begin with the raw amino-acid sequence, 305 residues long: Methionyl-tRNA formyltransferase (305 aa).

108–111 (SLLP) provides a ligand contact to (6S)-5,6,7,8-tetrahydrofolate.

This sequence belongs to the Fmt family.

It carries out the reaction L-methionyl-tRNA(fMet) + (6R)-10-formyltetrahydrofolate = N-formyl-L-methionyl-tRNA(fMet) + (6S)-5,6,7,8-tetrahydrofolate + H(+). In terms of biological role, attaches a formyl group to the free amino group of methionyl-tRNA(fMet). The formyl group appears to play a dual role in the initiator identity of N-formylmethionyl-tRNA by promoting its recognition by IF2 and preventing the misappropriation of this tRNA by the elongation apparatus. The sequence is that of Methionyl-tRNA formyltransferase from Clavibacter sepedonicus (Clavibacter michiganensis subsp. sepedonicus).